The chain runs to 305 residues: UDP-3-O-acyl-N-acetylglucosamine deacetylase (305 aa).

Residues His-79, His-238, and Asp-242 each contribute to the Zn(2+) site. Residue His-265 is the Proton donor of the active site.

It belongs to the LpxC family. Zn(2+) is required as a cofactor.

The enzyme catalyses a UDP-3-O-[(3R)-3-hydroxyacyl]-N-acetyl-alpha-D-glucosamine + H2O = a UDP-3-O-[(3R)-3-hydroxyacyl]-alpha-D-glucosamine + acetate. It functions in the pathway glycolipid biosynthesis; lipid IV(A) biosynthesis; lipid IV(A) from (3R)-3-hydroxytetradecanoyl-[acyl-carrier-protein] and UDP-N-acetyl-alpha-D-glucosamine: step 2/6. In terms of biological role, catalyzes the hydrolysis of UDP-3-O-myristoyl-N-acetylglucosamine to form UDP-3-O-myristoylglucosamine and acetate, the committed step in lipid A biosynthesis. This is UDP-3-O-acyl-N-acetylglucosamine deacetylase from Haemophilus influenzae (strain 86-028NP).